The chain runs to 330 residues: Lactamase-like protein nscB (330 aa).

4 residues coordinate Zn(2+): H97, H99, D101, and H102. D101 acts as the Proton donor/acceptor in catalysis.

The protein belongs to the metallo-beta-lactamase superfamily. The cofactor is Zn(2+).

It functions in the pathway secondary metabolite biosynthesis. Functionally, lactamase-like protein; part of the gene cluster that mediates the biosynthesis of neosartoricin, a prenylated anthracenone that exhibits T-cell antiproliferative activity, suggestive of a physiological role as an immunosuppressive agent. The non-reducing polyketide synthase nscA probably synthesizes and cyclizes the decaketide backbone. The hydrolase nscB then mediates the product release through hydrolysis followed by spontaneous decarboxylation. The prenyltransferase nscD catalyzes the addition of the dimethylallyl group to the aromatic C5. The FAD-dependent monooxygenase nscC is then responsible for the stereospecific hydroxylation at C2. There is no gene encoding O-acetyltransferase in the nsc gene cluster; thus, the last step of 2-O-acetylation leading to neosartoricin may be catalyzed by an unidentified O-acetyltransferase. In Aspergillus fumigatus (strain ATCC MYA-4609 / CBS 101355 / FGSC A1100 / Af293) (Neosartorya fumigata), this protein is Lactamase-like protein nscB.